A 297-amino-acid chain; its full sequence is uncharacterized protein (297 aa).

WD repeat units follow at residues 12 to 51, 54 to 93, 96 to 135, 140 to 177, 179 to 217, 222 to 261, and 265 to 297; these read KAKE…CIHE, GHGH…VDRR, GHLA…FSPI, DAKD…LSSD, FSHP…ILKS, KNME…QITS, and VGTP…YQYN.

Belongs to the WD repeat MORG1 family.

The protein resides in the cytoplasm. The protein localises to the nucleus. This is an uncharacterized protein from Schizosaccharomyces pombe (strain 972 / ATCC 24843) (Fission yeast).